Consider the following 326-residue polypeptide: uncharacterized protein (326 aa).

Residue 28 to 35 (GPINSGKT) participates in ATP binding.

Belongs to the archaeal ATPase family.

This is an uncharacterized protein from Pyrococcus abyssi (strain GE5 / Orsay).